We begin with the raw amino-acid sequence, 471 residues long: MAKKYDAGVKDYRETYWMPDYTPKETDLLACFKIIPQPGVPREEARAAVAAESSTGTWTTVWTDLLTDLDHYKGRAYAIEDVPGDEEAFYAFIAYPIDLFEEGSVVNVFTSLVGNVFGFKAIRALRLEDVRFPIAYVMTCNGPPHGIQVERDIMNKYGRPLLGCTIKPKLGLSAKNYGRAVYECLRGGLDFTKDDENVNSQPFMRWRHGFDFVMEAIEKAERETGERKGHYLNVTAPTPDEMFKRAEYAKEIGAPIIMHDYITGGFTANTGLAQWCRDNGVLLHIHRAMHAVLDRNPHHGIHFRVLTKILRLSGGDHLHTGTVVGKLEGDREATLGWIDLLRESYIKEDRSRGIFFDQDWGSMPGVFAACSGGIHVWHMPALVTIFGEHAVLQFGGGTLGHPWGNAGAAANRVALEACVEARNEGHELEKEGKDILIQAAKHSPELKTAMETWKEIKFEFDTVDKLDVAHK.

2 residues coordinate substrate: Asn-115 and Thr-165. Lys-167 (proton acceptor) is an active-site residue. Lys-169 serves as a coordination point for substrate. The Mg(2+) site is built by Lys-193, Asp-195, and Glu-196. Lys-193 is subject to N6-carboxylysine. Catalysis depends on His-286, which acts as the Proton acceptor. Residues Arg-287, His-319, and Ser-371 each contribute to the substrate site.

The protein belongs to the RuBisCO large chain family. Type I subfamily. In terms of assembly, heterohexadecamer of 8 large chains and 8 small chains. Requires Mg(2+) as cofactor.

It catalyses the reaction 2 (2R)-3-phosphoglycerate + 2 H(+) = D-ribulose 1,5-bisphosphate + CO2 + H2O. The catalysed reaction is D-ribulose 1,5-bisphosphate + O2 = 2-phosphoglycolate + (2R)-3-phosphoglycerate + 2 H(+). Its function is as follows. RuBisCO catalyzes two reactions: the carboxylation of D-ribulose 1,5-bisphosphate, the primary event in carbon dioxide fixation, as well as the oxidative fragmentation of the pentose substrate. Both reactions occur simultaneously and in competition at the same active site. This chain is Ribulose bisphosphate carboxylase large chain, found in Alvinoconcha hessleri symbiotic bacterium.